A 66-amino-acid chain; its full sequence is UPF0434 protein Nwi_0075 (66 aa).

Belongs to the UPF0434 family.

This Nitrobacter winogradskyi (strain ATCC 25391 / DSM 10237 / CIP 104748 / NCIMB 11846 / Nb-255) protein is UPF0434 protein Nwi_0075.